A 172-amino-acid chain; its full sequence is Adenine phosphoribosyltransferase (172 aa).

It belongs to the purine/pyrimidine phosphoribosyltransferase family. As to quaternary structure, homodimer.

The protein localises to the cytoplasm. It carries out the reaction AMP + diphosphate = 5-phospho-alpha-D-ribose 1-diphosphate + adenine. It functions in the pathway purine metabolism; AMP biosynthesis via salvage pathway; AMP from adenine: step 1/1. Catalyzes a salvage reaction resulting in the formation of AMP, that is energically less costly than de novo synthesis. In Hydrogenovibrio crunogenus (strain DSM 25203 / XCL-2) (Thiomicrospira crunogena), this protein is Adenine phosphoribosyltransferase.